We begin with the raw amino-acid sequence, 354 residues long: Uroporphyrinogen decarboxylase (354 aa).

Substrate-binding positions include 27–31 (RQAGR), aspartate 77, tyrosine 154, serine 209, and histidine 327.

Belongs to the uroporphyrinogen decarboxylase family. In terms of assembly, homodimer.

It localises to the cytoplasm. It catalyses the reaction uroporphyrinogen III + 4 H(+) = coproporphyrinogen III + 4 CO2. Its pathway is porphyrin-containing compound metabolism; protoporphyrin-IX biosynthesis; coproporphyrinogen-III from 5-aminolevulinate: step 4/4. Its function is as follows. Catalyzes the decarboxylation of four acetate groups of uroporphyrinogen-III to yield coproporphyrinogen-III. The polypeptide is Uroporphyrinogen decarboxylase (Saccharophagus degradans (strain 2-40 / ATCC 43961 / DSM 17024)).